We begin with the raw amino-acid sequence, 287 residues long: Phosphoribosylaminoimidazole-succinocarboxamide synthase (287 aa).

The protein belongs to the SAICAR synthetase family.

It catalyses the reaction 5-amino-1-(5-phospho-D-ribosyl)imidazole-4-carboxylate + L-aspartate + ATP = (2S)-2-[5-amino-1-(5-phospho-beta-D-ribosyl)imidazole-4-carboxamido]succinate + ADP + phosphate + 2 H(+). The protein operates within purine metabolism; IMP biosynthesis via de novo pathway; 5-amino-1-(5-phospho-D-ribosyl)imidazole-4-carboxamide from 5-amino-1-(5-phospho-D-ribosyl)imidazole-4-carboxylate: step 1/2. The protein is Phosphoribosylaminoimidazole-succinocarboxamide synthase of Neisseria meningitidis serogroup C (strain 053442).